Here is a 222-residue protein sequence, read N- to C-terminus: MSKKLVLFCDFDGTITEKDNIVAIVRKFAPPEWEALTEQILSQKISVQEGVGKLFQLLPSSLRQDIIDFIVHEATIRPGFAEFVSYCREEGIELLITSGGIDFFLEPILAPFDLADVPIYCNGSDFSGERITITWPNACDEHCTNGCGMCKTTIIRRYDPATHFRIVIGDSITDLAGAKIADYVIARSFLADKAEELQLPHSTFATFHDVIRILQQVQQEVV.

Belongs to the HAD-like hydrolase superfamily. MtnX family.

It catalyses the reaction 2-hydroxy-5-methylsulfanyl-3-oxopent-1-enyl phosphate + H2O = 1,2-dihydroxy-5-(methylsulfanyl)pent-1-en-3-one + phosphate. The protein operates within amino-acid biosynthesis; L-methionine biosynthesis via salvage pathway; L-methionine from S-methyl-5-thio-alpha-D-ribose 1-phosphate: step 4/6. Functionally, dephosphorylates 2-hydroxy-3-keto-5-methylthiopentenyl-1-phosphate (HK-MTPenyl-1-P) yielding 1,2-dihydroxy-3-keto-5-methylthiopentene (DHK-MTPene). The protein is 2-hydroxy-3-keto-5-methylthiopentenyl-1-phosphate phosphatase of Brevibacillus brevis (strain 47 / JCM 6285 / NBRC 100599).